Reading from the N-terminus, the 956-residue chain is Glycine dehydrogenase (decarboxylating) (956 aa).

K697 carries the N6-(pyridoxal phosphate)lysine modification.

This sequence belongs to the GcvP family. In terms of assembly, the glycine cleavage system is composed of four proteins: P, T, L and H. Requires pyridoxal 5'-phosphate as cofactor.

It carries out the reaction N(6)-[(R)-lipoyl]-L-lysyl-[glycine-cleavage complex H protein] + glycine + H(+) = N(6)-[(R)-S(8)-aminomethyldihydrolipoyl]-L-lysyl-[glycine-cleavage complex H protein] + CO2. In terms of biological role, the glycine cleavage system catalyzes the degradation of glycine. The P protein binds the alpha-amino group of glycine through its pyridoxal phosphate cofactor; CO(2) is released and the remaining methylamine moiety is then transferred to the lipoamide cofactor of the H protein. This Cereibacter sphaeroides (strain KD131 / KCTC 12085) (Rhodobacter sphaeroides) protein is Glycine dehydrogenase (decarboxylating).